The chain runs to 515 residues: MTATPKPLVLIILDGFGHSESPDYNAIYAAKKPVWDRLLATQPHGLISGSGMDVGLPDGQMGNSEVGHMNLGAGRVVYQDFTRVTKAIRDGEFFENPVIAGAVDKAVAADKAVHILGLLSPGGVHSHEDHLVAMAQMAARRGAGKIYLHAFLDGRDTPPKSAQPSLERLDATFAGLGKGRIASIIGRYFAMDRDNRWDRVQAAYELIVDGKAEFTADSSVAALEAAYARGESDEFVKATAVVPAGAEAVRVEDGDAVIFMNFRADRARELSRAFVEPAFNEFPRERAPQLAGFVMLTQYAASIPAPCAFPPEPLTNVLGEYLAKHGKTQLRIAETEKYAHVTFFFSGGREEPYEGEERILIPSPKVATYDLQPEMSAPEVTDRIVEAIEQQRYDVIVVNYANGDMVGHTGVFEAAVKAVECLDTCMGRIVEALDKVGGEALITADHGNVEQMEDESTGQAHTAHTCEPVPFVYVGKRKLSIREGGVLADVAPTMLTLMGLEQPAEMTGRSIVTLG.

Residues Asp14 and Ser64 each contribute to the Mn(2+) site. The active-site Phosphoserine intermediate is the Ser64. Substrate contacts are provided by residues His125, 155–156 (RD), Arg187, Arg193, 263–266 (RADR), and Lys337. Mn(2+) is bound by residues Asp404, His408, Asp445, His446, and His464.

Belongs to the BPG-independent phosphoglycerate mutase family. In terms of assembly, monomer. Mn(2+) is required as a cofactor.

The enzyme catalyses (2R)-2-phosphoglycerate = (2R)-3-phosphoglycerate. It participates in carbohydrate degradation; glycolysis; pyruvate from D-glyceraldehyde 3-phosphate: step 3/5. Functionally, catalyzes the interconversion of 2-phosphoglycerate and 3-phosphoglycerate. The polypeptide is 2,3-bisphosphoglycerate-independent phosphoglycerate mutase (Pseudomonas aeruginosa (strain ATCC 15692 / DSM 22644 / CIP 104116 / JCM 14847 / LMG 12228 / 1C / PRS 101 / PAO1)).